We begin with the raw amino-acid sequence, 261 residues long: MLDKVKNVIVVLSGKGGVGKSTVSTQLALALRQTGHKVGLLDIDLCGPSVPYLLGLEGSDIFQCDEGWVPIYTDESQTLAVMSIGFLLKNRTDPVIWRGPKKTMMIRQFLTDVKWDELDYLIIDTPPGTSDEHITVMECLREVPCNGAIIVTTPQGVALDDVRKEITFCKKTGIKLLGIVENMSGFVCPHCTSCTNIFSSNGGVELAKYAQIPHLGTLPIDPRVGVLAGTTASVLDELPDSTTAEVLRGLVQHLDSITLTA.

Glycine 14 to serine 21 contributes to the ATP binding site. [4Fe-4S] cluster contacts are provided by cysteine 188 and cysteine 191.

Belongs to the Mrp/NBP35 ATP-binding proteins family. NUBP2/CFD1 subfamily. As to quaternary structure, heterotetramer of 2 Nubp1 and 2 Nubp2 chains. [4Fe-4S] cluster is required as a cofactor.

The protein resides in the cytoplasm. In terms of biological role, component of the cytosolic iron-sulfur (Fe/S) protein assembly (CIA) machinery. Required for maturation of extramitochondrial Fe-S proteins. The Nubp1-Nubp2 heterotetramer forms a Fe-S scaffold complex, mediating the de novo assembly of an Fe-S cluster and its transfer to target apoproteins. This Drosophila ananassae (Fruit fly) protein is Cytosolic Fe-S cluster assembly factor Nubp2 homolog.